The chain runs to 480 residues: Citrate synthase 1, peroxisomal (480 aa).

Active-site residues include His-321, His-360, and Asp-416.

The protein belongs to the citrate synthase family. As to expression, expressed only in siliques. Not expressed in flower, stem, cauline leaf, young leaf, mature leaf and senescent leaf.

Its subcellular location is the peroxisome. It catalyses the reaction oxaloacetate + acetyl-CoA + H2O = citrate + CoA + H(+). It functions in the pathway carbohydrate metabolism; tricarboxylic acid cycle; isocitrate from oxaloacetate: step 1/2. The protein is Citrate synthase 1, peroxisomal (CSY1) of Arabidopsis thaliana (Mouse-ear cress).